Reading from the N-terminus, the 155-residue chain is Ribosome maturation factor RimP (155 aa).

The protein belongs to the RimP family.

It is found in the cytoplasm. Required for maturation of 30S ribosomal subunits. The protein is Ribosome maturation factor RimP of Gloeothece citriformis (strain PCC 7424) (Cyanothece sp. (strain PCC 7424)).